Reading from the N-terminus, the 103-residue chain is MYAVFQSGGKQHRVSEGQVVRLEKLEVATGEKVEFDSVLMVVNGEDVKIGTPVVAGGKVVAEVVAHGRGEKVRIVKFRRRKHSRKQQGHRQWFTEVKITGIQA.

Belongs to the bacterial ribosomal protein bL21 family. In terms of assembly, part of the 50S ribosomal subunit. Contacts protein L20.

Its function is as follows. This protein binds to 23S rRNA in the presence of protein L20. This chain is Large ribosomal subunit protein bL21, found in Glaesserella parasuis serovar 5 (strain SH0165) (Haemophilus parasuis).